Consider the following 440-residue polypeptide: Glutamate-1-semialdehyde 2,1-aminomutase (440 aa).

Lys271 bears the N6-(pyridoxal phosphate)lysine mark.

It belongs to the class-III pyridoxal-phosphate-dependent aminotransferase family. HemL subfamily. As to quaternary structure, homodimer. Pyridoxal 5'-phosphate serves as cofactor.

The protein resides in the cytoplasm. It carries out the reaction (S)-4-amino-5-oxopentanoate = 5-aminolevulinate. Its pathway is porphyrin-containing compound metabolism; protoporphyrin-IX biosynthesis; 5-aminolevulinate from L-glutamyl-tRNA(Glu): step 2/2. The polypeptide is Glutamate-1-semialdehyde 2,1-aminomutase (Chlamydia pneumoniae (Chlamydophila pneumoniae)).